We begin with the raw amino-acid sequence, 234 residues long: Octanoyltransferase (234 aa).

The 187-residue stretch at 35–221 (DGAPELVWFL…AFQQVFASPL (187 aa)) folds into the BPL/LPL catalytic domain. Substrate-binding positions include 74 to 81 (RGGQYTYH), 150 to 152 (AIG), and 163 to 165 (GIS). The active-site Acyl-thioester intermediate is Cys181.

It belongs to the LipB family.

It is found in the cytoplasm. It carries out the reaction octanoyl-[ACP] + L-lysyl-[protein] = N(6)-octanoyl-L-lysyl-[protein] + holo-[ACP] + H(+). It functions in the pathway protein modification; protein lipoylation via endogenous pathway; protein N(6)-(lipoyl)lysine from octanoyl-[acyl-carrier-protein]: step 1/2. Catalyzes the transfer of endogenously produced octanoic acid from octanoyl-acyl-carrier-protein onto the lipoyl domains of lipoate-dependent enzymes. Lipoyl-ACP can also act as a substrate although octanoyl-ACP is likely to be the physiological substrate. The sequence is that of Octanoyltransferase from Hyphomonas neptunium (strain ATCC 15444).